Here is an 89-residue protein sequence, read N- to C-terminus: Acylphosphatase (89 aa).

One can recognise an Acylphosphatase-like domain in the interval 3–89 (ALEIYVSGNV…ENYESFEVAY (87 aa)). Active-site residues include R18 and N36.

This sequence belongs to the acylphosphatase family.

It catalyses the reaction an acyl phosphate + H2O = a carboxylate + phosphate + H(+). The sequence is that of Acylphosphatase (acyP) from Archaeoglobus fulgidus (strain ATCC 49558 / DSM 4304 / JCM 9628 / NBRC 100126 / VC-16).